We begin with the raw amino-acid sequence, 535 residues long: MELSPRSPPEMLESDCPSPLELKSAPSKKMWIKLRSLLRYMVKQLENGEVNIEELKKNLEYTASLLEAVYIDETRQILDTEDELRELRSDAVPSEVRDWLASTFTQQTRAKGRRAEEKPKFRSIVHAVQAGIFVERMFRRTYTAVGPTYSTAVHNCLKNLDVWCFDVFSLNRAADDHALRTIVFELLTRHSLISRFKIPTVFLMSFLEALETGYGKYKNPYHNQIHAADVTQTVHCFLLRTGMVHCLSEIEVLAIIFAAAIHDYEHTGTTNSFHIQTKSECAILYNDRSVLENHHISSVFRMMQDDEMNIFINLTKDEFVELRALVIEMVLATDMSCHFQQVKTMKTALQQLERIDKSKALSLLLHAADISHPTKQWSVHSRWTKALMEEFFRQGDKEAELGLPFSPLCDRTSTLVAQSQIGFIDFIVEPTFSVLTDVAEKSVQPLTDDDSKSKSQPSFQWRQPSLDVDVGDPNPDVVSFRSTWTKYIQENKQKWKERAASGITNQMSIDELSPCEEEAPSSPAEDEHNQNGNLD.

The interval 1–21 (MELSPRSPPEMLESDCPSPLE) is disordered. A phosphoserine mark is found at serine 7 and serine 14. Calmodulin-binding regions lie at residues 27–47 (SKKMWIKLRSLLRYMVKQLEN) and 117–140 (EKPKFRSIVHAVQAGIFVERMFRR). One can recognise a PDEase domain in the interval 145–502 (VGPTYSTAVH…QKWKERAASG (358 aa)). Histidine 222 acts as the Proton donor in catalysis. 4 residues coordinate Zn(2+): histidine 226, histidine 262, aspartate 263, and aspartate 369. A Mg(2+)-binding site is contributed by aspartate 263. 2 disordered regions span residues 445–474 (PLTDDDSKSKSQPSFQWRQPSLDVDVGDPN) and 495–535 (WKER…GNLD). Residues 454–463 (KSQPSFQWRQ) show a composition bias toward polar residues. A phosphoserine mark is found at serine 465 and serine 513.

It belongs to the cyclic nucleotide phosphodiesterase family. PDE1 subfamily. As to quaternary structure, homodimer. Requires Zn(2+) as cofactor. The cofactor is Mg(2+). Expressed in brain.

The protein resides in the cytoplasm. Its subcellular location is the cytosol. It catalyses the reaction a nucleoside 3',5'-cyclic phosphate + H2O = a nucleoside 5'-phosphate + H(+). The enzyme catalyses 3',5'-cyclic GMP + H2O = GMP + H(+). It carries out the reaction 3',5'-cyclic AMP + H2O = AMP + H(+). Its activity is regulated as follows. Type I PDE are activated by the binding of calmodulin in the presence of Ca(2+). Functionally, cyclic nucleotide phosphodiesterase with a dual specificity for the second messengers cAMP and cGMP, which are key regulators of many important physiological processes. Has a preference for cGMP as a substrate. The chain is Dual specificity calcium/calmodulin-dependent 3',5'-cyclic nucleotide phosphodiesterase 1B from Rattus norvegicus (Rat).